We begin with the raw amino-acid sequence, 95 residues long: UPF0213 protein YPA_2977 (95 aa).

A GIY-YIG domain is found at 4–79 (SLWHLYLLRT…KQLSKQQKEK (76 aa)).

The protein belongs to the UPF0213 family.

This Yersinia pestis bv. Antiqua (strain Antiqua) protein is UPF0213 protein YPA_2977.